The following is a 337-amino-acid chain: Anthranilate phosphoribosyltransferase (337 aa).

5-phospho-alpha-D-ribose 1-diphosphate is bound by residues G80, 83 to 84, T88, 90 to 93, 108 to 116, and S120; these read GD, NIST, and KHGNRAVSS. An anthranilate-binding site is contributed by G80. S92 is a binding site for Mg(2+). Position 111 (N111) interacts with anthranilate. Residue R166 participates in anthranilate binding. Mg(2+)-binding residues include D224 and E225.

This sequence belongs to the anthranilate phosphoribosyltransferase family. In terms of assembly, homodimer. Mg(2+) serves as cofactor.

The catalysed reaction is N-(5-phospho-beta-D-ribosyl)anthranilate + diphosphate = 5-phospho-alpha-D-ribose 1-diphosphate + anthranilate. The protein operates within amino-acid biosynthesis; L-tryptophan biosynthesis; L-tryptophan from chorismate: step 2/5. Functionally, catalyzes the transfer of the phosphoribosyl group of 5-phosphorylribose-1-pyrophosphate (PRPP) to anthranilate to yield N-(5'-phosphoribosyl)-anthranilate (PRA). The chain is Anthranilate phosphoribosyltransferase from Anaeromyxobacter dehalogenans (strain 2CP-C).